A 431-amino-acid chain; its full sequence is Glutamate-1-semialdehyde 2,1-aminomutase (431 aa).

Lys269 is subject to N6-(pyridoxal phosphate)lysine.

The protein belongs to the class-III pyridoxal-phosphate-dependent aminotransferase family. HemL subfamily. Homodimer. It depends on pyridoxal 5'-phosphate as a cofactor.

It is found in the cytoplasm. It carries out the reaction (S)-4-amino-5-oxopentanoate = 5-aminolevulinate. It functions in the pathway porphyrin-containing compound metabolism; protoporphyrin-IX biosynthesis; 5-aminolevulinate from L-glutamyl-tRNA(Glu): step 2/2. It participates in porphyrin-containing compound metabolism; chlorophyll biosynthesis. This is Glutamate-1-semialdehyde 2,1-aminomutase from Chlorobium luteolum (strain DSM 273 / BCRC 81028 / 2530) (Pelodictyon luteolum).